The sequence spans 125 residues: Small ribosomal subunit protein uS13 (125 aa).

A disordered region spans residues Arg-99 to Lys-125.

This sequence belongs to the universal ribosomal protein uS13 family. As to quaternary structure, part of the 30S ribosomal subunit. Forms a loose heterodimer with protein S19. Forms two bridges to the 50S subunit in the 70S ribosome.

Located at the top of the head of the 30S subunit, it contacts several helices of the 16S rRNA. In the 70S ribosome it contacts the 23S rRNA (bridge B1a) and protein L5 of the 50S subunit (bridge B1b), connecting the 2 subunits; these bridges are implicated in subunit movement. Contacts the tRNAs in the A and P-sites. This chain is Small ribosomal subunit protein uS13, found in Borrelia turicatae (strain 91E135).